The following is a 265-amino-acid chain: MIKWPWKVQESAHQTALPWQEALSIPLLTCLTEQEQSKLVTLAERFLQQKRLVPLQGFELDSLRSCRIALLFCLPVLELGLEWLDGFHEVLIYPAPFVVDDEWEDDIGLVHNQRIVQSGQSWQQGPIVLNWLDIQDSFDASGFNLIIHEVAHKLDTRNGDRASGVPFIPLREVAGWEHDLHAAMNNIQEEIELVGENAASIDAYAASDPAECFAVLSEYFFSAPELFAPGFPSLWQRFCQFYQQDPLQRLHRTNDTDSFSATNVH.

Residues His-111, His-148, His-152, and Glu-211 each coordinate Zn(2+).

Belongs to the MtfA family. In terms of assembly, interacts with Mlc. Zn(2+) serves as cofactor.

It is found in the cytoplasm. Its function is as follows. Involved in the modulation of the activity of the glucose-phosphotransferase system (glucose-PTS). Interacts with the transcriptional repressor Mlc, preventing its interaction with DNA and leading to the modulation of expression of genes regulated by Mlc, including ptsG, which encodes the PTS system glucose-specific EIICB component. Functionally, shows zinc-dependent metallopeptidase activity. The sequence is that of Mlc titration factor A from Escherichia coli O139:H28 (strain E24377A / ETEC).